The sequence spans 276 residues: Melibiose/raffinose/stachyose import permease protein MelC (276 aa).

The next 6 membrane-spanning stretches (helical) occupy residues 11 to 31 (IITL…YILL), 74 to 94 (IITG…AYPL), 104 to 124 (AVFA…MVPL), 139 to 159 (IAIF…YSGF), 186 to 206 (IVFP…CVFI), and 240 to 260 (LHLV…LFLA). Residues 69–261 (FINTMIITGF…LPMVVLFLAL (193 aa)) form the ABC transmembrane type-1 domain.

The protein belongs to the binding-protein-dependent transport system permease family. In terms of assembly, the complex is composed of two ATP-binding proteins (MsmX), two transmembrane proteins (MelC and MelD) and a solute-binding protein (MelE).

Its subcellular location is the cell membrane. In terms of biological role, part of the ABC transporter complex MelEDC-MsmX involved in melibiose, raffinose and stachyose import. Probably responsible for the translocation of the substrate across the membrane. This Bacillus subtilis (strain 168) protein is Melibiose/raffinose/stachyose import permease protein MelC.